A 100-amino-acid chain; its full sequence is Large ribosomal subunit protein uL23 (100 aa).

This sequence belongs to the universal ribosomal protein uL23 family. As to quaternary structure, part of the 50S ribosomal subunit. Contacts protein L29, and trigger factor when it is bound to the ribosome.

Functionally, one of the early assembly proteins it binds 23S rRNA. One of the proteins that surrounds the polypeptide exit tunnel on the outside of the ribosome. Forms the main docking site for trigger factor binding to the ribosome. This is Large ribosomal subunit protein uL23 from Prochlorococcus marinus (strain MIT 9313).